Reading from the N-terminus, the 152-residue chain is Small ribosomal subunit protein uS8m (152 aa).

Belongs to the universal ribosomal protein uS8 family.

Its subcellular location is the mitochondrion. The sequence is that of Small ribosomal subunit protein uS8m (RPS8) from Marchantia polymorpha (Common liverwort).